A 333-amino-acid polypeptide reads, in one-letter code: Ribosomal RNA small subunit methyltransferase H (333 aa).

S-adenosyl-L-methionine is bound by residues 43–45 (GGH), aspartate 62, tyrosine 89, aspartate 110, and glutamine 117. Positions 312–333 (RLRAARRIRTTPTRPSPRRRRP) are disordered.

This sequence belongs to the methyltransferase superfamily. RsmH family.

The protein localises to the cytoplasm. It catalyses the reaction cytidine(1402) in 16S rRNA + S-adenosyl-L-methionine = N(4)-methylcytidine(1402) in 16S rRNA + S-adenosyl-L-homocysteine + H(+). Functionally, specifically methylates the N4 position of cytidine in position 1402 (C1402) of 16S rRNA. This Beutenbergia cavernae (strain ATCC BAA-8 / DSM 12333 / CCUG 43141 / JCM 11478 / NBRC 16432 / NCIMB 13614 / HKI 0122) protein is Ribosomal RNA small subunit methyltransferase H.